We begin with the raw amino-acid sequence, 156 residues long: Endogenous retrovirus group K member 24 Pro protein (156 aa).

The Peptidase A2 domain occupies 21–96; it reads FEGLVDTGAD…IPLNLWGRDL (76 aa). Residue Asp-26 is part of the active site. The G-patch domain occupies 111 to 156; sequence YSPTSQKIMTKMGYIPGKGLGKNEDGIKIPFEAKINQKREGIGYPF.

Belongs to the peptidase A2 family. HERV class-II K(HML-2) subfamily. In terms of assembly, active as a homodimer. Post-translationally, autoproteolytically processed at the N-terminus. Expected C-terminal autoprocessing not detected. The sequence shown is that of the processed Pro protein.

It carries out the reaction Processing at the authentic HIV-1 PR recognition site and release of the mature p17 matrix and the p24 capsid protein, as a result of the cleavage of the -SQNY-|-PIVQ- cleavage site.. Functionally, retroviral proteases have roles in processing of the primary translation products and the maturation of the viral particle. Endogenous Pro proteins may have kept, lost or modified their original function during evolution. This endogenous protein has retained most of the characteristics of retroviral proteases. The sequence is that of Endogenous retrovirus group K member 24 Pro protein (ERVK-24) from Homo sapiens (Human).